Consider the following 619-residue polypeptide: Dihydroxy-acid dehydratase 1 (619 aa).

Aspartate 81 provides a ligand contact to Mg(2+). Cysteine 122 provides a ligand contact to [2Fe-2S] cluster. Mg(2+) is bound by residues aspartate 123 and lysine 124. Lysine 124 carries the N6-carboxylysine modification. Cysteine 198 contacts [2Fe-2S] cluster. Glutamate 494 lines the Mg(2+) pocket. Serine 520 (proton acceptor) is an active-site residue.

The protein belongs to the IlvD/Edd family. Homodimer. [2Fe-2S] cluster serves as cofactor. Mg(2+) is required as a cofactor.

The catalysed reaction is (2R)-2,3-dihydroxy-3-methylbutanoate = 3-methyl-2-oxobutanoate + H2O. It catalyses the reaction (2R,3R)-2,3-dihydroxy-3-methylpentanoate = (S)-3-methyl-2-oxopentanoate + H2O. Its pathway is amino-acid biosynthesis; L-isoleucine biosynthesis; L-isoleucine from 2-oxobutanoate: step 3/4. The protein operates within amino-acid biosynthesis; L-valine biosynthesis; L-valine from pyruvate: step 3/4. Its function is as follows. Functions in the biosynthesis of branched-chain amino acids. Catalyzes the dehydration of (2R,3R)-2,3-dihydroxy-3-methylpentanoate (2,3-dihydroxy-3-methylvalerate) into 2-oxo-3-methylpentanoate (2-oxo-3-methylvalerate) and of (2R)-2,3-dihydroxy-3-methylbutanoate (2,3-dihydroxyisovalerate) into 2-oxo-3-methylbutanoate (2-oxoisovalerate), the penultimate precursor to L-isoleucine and L-valine, respectively. In Bordetella pertussis (strain Tohama I / ATCC BAA-589 / NCTC 13251), this protein is Dihydroxy-acid dehydratase 1.